The chain runs to 471 residues: Putative multidrug resistance protein MdtD (471 aa).

At 1–11 the chain is on the periplasmic side; it reads MTDLPDSTRWQ. A helical membrane pass occupies residues 12–32; it reads LWIVAFGFFMQSLDTTIVNTA. The Cytoplasmic segment spans residues 33–48; it reads LPSMAQSLGESPLHMH. The helical transmembrane segment at 49 to 69 threads the bilayer; that stretch reads MVIVSYVLTVAVMLPASGWLA. At 70–76 the chain is on the periplasmic side; it reads DKVGVRN. Residues 77–97 traverse the membrane as a helical segment; that stretch reads IFFTAIVLFTLGSLFCALSGT. The Cytoplasmic portion of the chain corresponds to 98–101; the sequence is LNEL. A helical membrane pass occupies residues 102–124; it reads LLARALQGVGGAMMVPVGRLTVM. At 125-137 the chain is on the periplasmic side; that stretch reads KIVPREQYMAAMT. Residues 138-158 traverse the membrane as a helical segment; that stretch reads FVTLPGQVGPLLGPALGGLLV. Residues 159–164 are Cytoplasmic-facing; that stretch reads EYASWH. The helical transmembrane segment at 165-185 threads the bilayer; sequence WIFLINIPVGIIGAIATLLLM. The Periplasmic portion of the chain corresponds to 186-196; sequence PNYTMQTWRFD. A helical membrane pass occupies residues 197–217; that stretch reads LSGFLLLAVGMAVLTLALDGS. The Cytoplasmic portion of the chain corresponds to 218–224; it reads KGTGLSP. The chain crosses the membrane as a helical span at residues 225–245; it reads LAIAGLVAVGVVALVLYLLHA. Topologically, residues 246-262 are periplasmic; sequence RNNNRALFSLKLFRTRT. The chain crosses the membrane as a helical span at residues 263–283; sequence FSLGLAGSFAGRIGSGMLPFM. The Cytoplasmic segment spans residues 284–285; it reads TP. A helical membrane pass occupies residues 286–306; sequence VFLQIGLGFSPFHAGLMMIPM. Topologically, residues 307–341 are periplasmic; the sequence is VLGSMGMKRIVVQVVNRFGYRRVLVATTLGLSLVT. The helical transmembrane segment at 342-362 threads the bilayer; it reads LLFMTTALLGWYYVLPFVLFL. Residues 363 to 395 are Cytoplasmic-facing; that stretch reads QGMVNSTRFSSMNTLTLKDLPDNLASSGNSLLS. The helical transmembrane segment at 396-416 threads the bilayer; sequence MIMQLSMSIGVTIAGLLLGLF. At 417 to 430 the chain is on the periplasmic side; the sequence is GSQHVSVDSGTTQT. A helical membrane pass occupies residues 431 to 451; sequence VFMYTWLSMALIIALPAFIFA. The Cytoplasmic portion of the chain corresponds to 452–471; it reads RVPNDTHQNVAISRRKRSAQ.

Belongs to the major facilitator superfamily. TCR/Tet family.

Its subcellular location is the cell inner membrane. This Shigella boydii serotype 4 (strain Sb227) protein is Putative multidrug resistance protein MdtD.